The sequence spans 527 residues: Heat shock factor protein HSF8 (527 aa).

The DNA-binding element occupies 39 to 133 (PFLVKTYDMV…KSISRRKPAH (95 aa)). Disordered stretches follow at residues 128–158 (RRKP…HSAS), 241–273 (NESN…ADGQ), and 297–341 (SSPR…TSGK). Positions 134-152 (GHAQQQQQPHGNAQQQMQP) are enriched in low complexity. Over residues 317–326 (SPQSNASSGR) the composition is skewed to polar residues.

Belongs to the HSF family. Homotrimer. In terms of processing, exhibits temperature-dependent phosphorylation.

It localises to the nucleus. DNA-binding protein that specifically binds heat shock promoter elements (HSE) and activates transcription. The chain is Heat shock factor protein HSF8 (HSF8) from Solanum lycopersicum (Tomato).